Consider the following 318-residue polypeptide: MNGDHMVLGSSVTDKKAIILVTILLLLRLVAIAGNGFITAALGVEWVLRRMLLPCDKLLVSLGASHFCLQSVVMGKTIYVFLYPMAFPYNPVLQFLAFQWDFLNAATLWFSTWLSVFYCVKIATFTHPVFFWLKHKLSGWLPWMIFSYVGLSSFTTILFFIGNHRMYQNYLKNHLQPWNVTGNSIRSYCEKFYLFPLKMITWTMPTAVFFICMILLITSLGRHMKKALLTTSGFREPSVQAHIKALLALLSFAMLFISYFLSLVFSAAGIFPPLDFKFWVWESVIYLCAAVHPIILLFSNCRLRAVLKSRRSSRCGTP.

At 1-7 (MNGDHMV) the chain is on the extracellular side. Residues 8 to 28 (LGSSVTDKKAIILVTILLLLR) form a helical membrane-spanning segment. At 29-40 (LVAIAGNGFITA) the chain is on the cytoplasmic side. Residues 41–61 (ALGVEWVLRRMLLPCDKLLVS) form a helical membrane-spanning segment. Residues 62–88 (LGASHFCLQSVVMGKTIYVFLYPMAFP) lie on the Extracellular side of the membrane. The helical transmembrane segment at 89–109 (YNPVLQFLAFQWDFLNAATLW) threads the bilayer. The Cytoplasmic portion of the chain corresponds to 110–128 (FSTWLSVFYCVKIATFTHP). A helical transmembrane segment spans residues 129 to 149 (VFFWLKHKLSGWLPWMIFSYV). Residues 150 to 183 (GLSSFTTILFFIGNHRMYQNYLKNHLQPWNVTGN) lie on the Extracellular side of the membrane. N-linked (GlcNAc...) asparagine glycosylation is present at N179. Residues 184 to 204 (SIRSYCEKFYLFPLKMITWTM) form a helical membrane-spanning segment. Over 205 to 234 (PTAVFFICMILLITSLGRHMKKALLTTSGF) the chain is Cytoplasmic. The helical transmembrane segment at 235-255 (REPSVQAHIKALLALLSFAML) threads the bilayer. Over 256 to 264 (FISYFLSLV) the chain is Extracellular. The chain crosses the membrane as a helical span at residues 265 to 285 (FSAAGIFPPLDFKFWVWESVI). Residues 286 to 318 (YLCAAVHPIILLFSNCRLRAVLKSRRSSRCGTP) lie on the Cytoplasmic side of the membrane.

It belongs to the G-protein coupled receptor T2R family.

It localises to the membrane. In terms of biological role, receptor that may play a role in the perception of bitterness and is gustducin-linked. May play a role in sensing the chemical composition of the gastrointestinal content. The activity of this receptor may stimulate alpha gustducin, mediate PLC-beta-2 activation and lead to the gating of TRPM5. The chain is Taste receptor type 2 member 60 (TAS2R60) from Pan paniscus (Pygmy chimpanzee).